Here is a 198-residue protein sequence, read N- to C-terminus: Probable minor pilin MMP0709 (198 aa).

The propeptide occupies 1–5 (MSNRG). The short motif at 6–14 (QLSIEMVIL) is the QXSXEXXXL element.

In terms of processing, the N-terminus is probably cleaved by the prepilin peptidase EppA, which recognizes the class III signal sequence.

It is found in the secreted. The protein localises to the cell surface. Its subcellular location is the fimbrium. The chain is Probable minor pilin MMP0709 from Methanococcus maripaludis (strain DSM 14266 / JCM 13030 / NBRC 101832 / S2 / LL).